The sequence spans 336 residues: Ornithine carbamoyltransferase, catabolic (336 aa).

Residues 57–60 (STRT), Gln-84, Arg-108, and 135–138 (HPTQ) each bind carbamoyl phosphate. L-ornithine is bound by residues Asn-168, Asp-232, and 236 to 237 (SM). Residues 274–275 (CL) and Arg-321 contribute to the carbamoyl phosphate site.

Belongs to the aspartate/ornithine carbamoyltransferase superfamily. OTCase family.

It localises to the cytoplasm. The enzyme catalyses carbamoyl phosphate + L-ornithine = L-citrulline + phosphate + H(+). It participates in amino-acid degradation; L-arginine degradation via ADI pathway; carbamoyl phosphate from L-arginine: step 2/2. In terms of biological role, reversibly catalyzes the transfer of the carbamoyl group from carbamoyl phosphate (CP) to the N(epsilon) atom of ornithine (ORN) to produce L-citrulline. This is Ornithine carbamoyltransferase, catabolic (arcB) from Pseudomonas putida (strain ATCC 47054 / DSM 6125 / CFBP 8728 / NCIMB 11950 / KT2440).